A 312-amino-acid polypeptide reads, in one-letter code: Urease accessory protein UreD (312 aa).

The protein belongs to the UreD family. UreD, UreF and UreG form a complex that acts as a GTP-hydrolysis-dependent molecular chaperone, activating the urease apoprotein by helping to assemble the nickel containing metallocenter of UreC. The UreE protein probably delivers the nickel.

It is found in the cytoplasm. Required for maturation of urease via the functional incorporation of the urease nickel metallocenter. This is Urease accessory protein UreD from Marinomonas sp. (strain MWYL1).